The chain runs to 393 residues: Staphopain B (393 aa).

Residues 1–36 form the signal peptide; the sequence is MNSSYKSRVFNIISIIMVSMLILSLGAFANNNKAKA. Positions 37 to 219 are excised as a propeptide; sequence DSHSKQLEIN…KVEENEAIQE (183 aa). Residues Cys-243, His-340, and Asn-360 contribute to the active site.

It belongs to the peptidase C47 family. As to quaternary structure, in the cytoplasm, prematurely activated/folded SspB forms a stable non-covalent complex with SspC. Post-translationally, proteolytically cleaved by staphylococcal serine protease (SspA).

It localises to the secreted. With respect to regulation, prematurely activated/folded staphopain B is inhibited by staphostatin B (SspC), which is probably required to protect staphylococcal cytoplasmic proteins from degradation by SspB. In terms of biological role, cysteine protease that plays an important role in the inhibition of host innate immune response. Degrades host elastin, fibrogen, fibronectin and kininogen. Blocks phagocytosis of opsonised S.aureus by neutrophils and monocytes by inducing their death in a proteolytic activity-dependent manner. Decreases surface expression of the 'don't eat me' signal CD31 on neutrophils. Cleaves host galectin-3/LGALS3, thereby inhibiting the neutrophil-activating ability of the lectin. The polypeptide is Staphopain B (sspB) (Staphylococcus aureus (strain MSSA476)).